The primary structure comprises 694 residues: Elongation factor G (694 aa).

One can recognise a tr-type G domain in the interval 11–285 (KDYRNIGIMA…AVIDYLPSPL (275 aa)). GTP-binding positions include 20–27 (AHIDAGKT), 84–88 (DTPGH), and 138–141 (NKMD).

This sequence belongs to the TRAFAC class translation factor GTPase superfamily. Classic translation factor GTPase family. EF-G/EF-2 subfamily.

Its subcellular location is the cytoplasm. In terms of biological role, catalyzes the GTP-dependent ribosomal translocation step during translation elongation. During this step, the ribosome changes from the pre-translocational (PRE) to the post-translocational (POST) state as the newly formed A-site-bound peptidyl-tRNA and P-site-bound deacylated tRNA move to the P and E sites, respectively. Catalyzes the coordinated movement of the two tRNA molecules, the mRNA and conformational changes in the ribosome. The polypeptide is Elongation factor G (Mycoplasma mobile (strain ATCC 43663 / 163K / NCTC 11711) (Mesomycoplasma mobile)).